Reading from the N-terminus, the 542-residue chain is 4-coumarate--CoA ligase-like 1 (542 aa).

The ATP site is built by Ser189, Ser190, Gly191, Thr192, Thr193, and Lys197. Tyr237 contributes to the (E)-4-coumaroyl-AMP binding site. Arg258 lines the CoA pocket. The segment at Asp260 to Glu331 is SBD1. (E)-4-coumaroyl-AMP is bound by residues Ala309, Glu331, Ala332, and Thr336. ATP-binding residues include Glu331, Ala332, Thr336, Asp420, and Arg435. An SBD2 region spans residues Ala332–Tyr399. 2 residues coordinate (E)-4-coumaroyl-AMP: Lys437 and Lys441. CoA-binding residues include Lys443 and Gly444. Residue Lys526 participates in ATP binding.

The protein belongs to the ATP-dependent AMP-binding enzyme family. In terms of assembly, interacts with TKPR1, PKSA and PKSB. Requires Mg(2+) as cofactor. In terms of tissue distribution, mostly confined to anther tapetal cells.

It localises to the endoplasmic reticulum. It carries out the reaction (E)-4-coumarate + ATP + CoA = (E)-4-coumaroyl-CoA + AMP + diphosphate. It catalyses the reaction (E)-4-coumarate + ATP + H(+) = (E)-4-coumaroyl-AMP + diphosphate. The catalysed reaction is (E)-4-coumaroyl-AMP + CoA = (E)-4-coumaroyl-CoA + AMP + H(+). In terms of biological role, carboxylate--CoA ligase that may use 4-coumarate as substrate. Follows a two-step reaction mechanism, wherein the carboxylate substrate first undergoes adenylation by ATP, followed by a thioesterification in the presence of CoA to yield the final CoA thioester. The polypeptide is 4-coumarate--CoA ligase-like 1 (Arabidopsis thaliana (Mouse-ear cress)).